The sequence spans 134 residues: Postmeiotic segregation increased 2-like protein 5 (134 aa).

It belongs to the DNA mismatch repair MutL/HexB family.

The sequence is that of Postmeiotic segregation increased 2-like protein 5 (PMS2P5) from Homo sapiens (Human).